Consider the following 96-residue polypeptide: Co-chaperonin GroES (96 aa).

It belongs to the GroES chaperonin family. As to quaternary structure, heptamer of 7 subunits arranged in a ring. Interacts with the chaperonin GroEL.

It localises to the cytoplasm. Its function is as follows. Together with the chaperonin GroEL, plays an essential role in assisting protein folding. The GroEL-GroES system forms a nano-cage that allows encapsulation of the non-native substrate proteins and provides a physical environment optimized to promote and accelerate protein folding. GroES binds to the apical surface of the GroEL ring, thereby capping the opening of the GroEL channel. This chain is Co-chaperonin GroES, found in Vibrio campbellii (strain ATCC BAA-1116).